The chain runs to 345 residues: MAKAGEKSGGGGKRGLKRKAPAEEPQETAVASDGTAESGVQSAKAAAFPPGFSISEIKNKQRRHLMFTRWKQQQRKEKLAAKKKLKREREALGDKAPPKPVPKTIDNQRVYDETTVDPNDEEVAYDEATDEFASYFNRQTSPKILITTSDRPHGRTVRLCEQLSTVIPDSHVYYRRGLALKKIIPQCIARDFTDLIVINEDRKTPNGLILSHLPNGPTAHFKMSSVRLRKEIKRRGKDPTEHVPEIILNNFTTRLGHSIGRMFASLFPHNPQFIGRQVATFHNQRDYIFFRFHRYIFKSEKKVGIQELGPRFTLKLRSLQKGTFDSKYGEYEWVHKVCAYCSKAI.

Disordered stretches follow at residues 1–57 (MAKA…ISEI) and 70–105 (WKQQQRKEKLAAKKKLKREREALGDKAPPKPVPKTI). Residues 87-97 (REREALGDKAP) are compositionally biased toward basic and acidic residues. Residues 142–325 (PKILITTSDR…LRSLQKGTFD (184 aa)) form the Brix domain. Positions 303–320 (VGIQELGPRFTLKLRSLQ) are RNA-binding.

The protein resides in the nucleus. The protein localises to the nucleolus. Its function is as follows. May be required for ribosome biogenesis. The polypeptide is Ribosome production factor 1 (Rpf1) (Rattus norvegicus (Rat)).